Reading from the N-terminus, the 506-residue chain is ATP synthase subunit alpha (506 aa).

Position 172–179 (172–179) interacts with ATP; that stretch reads GDRKTGKT.

Belongs to the ATPase alpha/beta chains family. F-type ATPases have 2 components, CF(1) - the catalytic core - and CF(0) - the membrane proton channel. CF(1) has five subunits: alpha(3), beta(3), gamma(1), delta(1), epsilon(1). CF(0) has three main subunits: a(1), b(2) and c(9-12). The alpha and beta chains form an alternating ring which encloses part of the gamma chain. CF(1) is attached to CF(0) by a central stalk formed by the gamma and epsilon chains, while a peripheral stalk is formed by the delta and b chains.

It is found in the cell membrane. It carries out the reaction ATP + H2O + 4 H(+)(in) = ADP + phosphate + 5 H(+)(out). Its function is as follows. Produces ATP from ADP in the presence of a proton gradient across the membrane. The alpha chain is a regulatory subunit. In Lactobacillus gasseri (strain ATCC 33323 / DSM 20243 / BCRC 14619 / CIP 102991 / JCM 1131 / KCTC 3163 / NCIMB 11718 / NCTC 13722 / AM63), this protein is ATP synthase subunit alpha.